The primary structure comprises 1100 residues: DNA-directed RNA polymerase subunit beta (1100 aa).

The disordered stretch occupies residues 1064-1100; the sequence is YEEDKEVDLMADVNQRRTPSRPTYESMSVGDIDDDDD. A compositionally biased stretch (polar residues) spans 1079 to 1089; the sequence is RRTPSRPTYES.

Belongs to the RNA polymerase beta chain family. In terms of assembly, in cyanobacteria the RNAP catalytic core is composed of 2 alpha, 1 beta, 1 beta', 1 gamma and 1 omega subunit. When a sigma factor is associated with the core the holoenzyme is formed, which can initiate transcription.

It catalyses the reaction RNA(n) + a ribonucleoside 5'-triphosphate = RNA(n+1) + diphosphate. In terms of biological role, DNA-dependent RNA polymerase catalyzes the transcription of DNA into RNA using the four ribonucleoside triphosphates as substrates. The polypeptide is DNA-directed RNA polymerase subunit beta (Synechococcus elongatus (strain ATCC 33912 / PCC 7942 / FACHB-805) (Anacystis nidulans R2)).